The sequence spans 320 residues: MPKKKTGARKKAENRREREKQLRASRSTIDLAKHPCNASMECDKCQRRQKNRAFCYFCNSVQKLPICAQCGKTKCMMKSSDCVIKHAGVYSTGLAMVGAICDFCEAWVCHGRKCLSTHACACPLTDAECVECERGVWDHGGRIFSCSFCHNFLCEDDQFEHQASCQVLEAETFKCVSCNRLGQHSCLRCKACFCDDHTRSKVFKQEKGKQPPCPKCGHETQETKDLSMSTRSLKFGRQTGGEEGDGASGYDAYWKNLSSDKYGDTSYHDEEEDEYEAEDDEEEEDEGRKDSDTESSDLFTNLNLGRTYASGYAHYEEQEN.

The interval 1 to 23 is disordered; it reads MPKKKTGARKKAENRREREKQLR. The Nuclear localization signal signature appears at 3 to 11; sequence KKKTGARKK. A compositionally biased stretch (basic and acidic residues) spans 10–22; the sequence is KKAENRREREKQL. C4-type zinc fingers lie at residues 42 to 58, 67 to 104, 129 to 149, and 175 to 189; these read CDKC…CYFC, CAQC…CDFC, CVEC…CSFC, and CVSC…CLRC. The tract at residues 206–320 is disordered; sequence EKGKQPPCPK…GYAHYEEQEN (115 aa). Basic and acidic residues predominate over residues 216–225; sequence CGHETQETKD. A compositionally biased stretch (acidic residues) spans 269–285; sequence DEEEDEYEAEDDEEEED. Ser-291 is modified (phosphoserine).

Belongs to the NOA36 family. Widely expressed. Higher expression seen in heart and skeletal muscle.

The protein resides in the nucleus. It localises to the nucleolus. Its subcellular location is the chromosome. The protein localises to the centromere. This chain is Zinc finger protein 330 (ZNF330), found in Homo sapiens (Human).